The primary structure comprises 474 residues: tRNA-2-methylthio-N(6)-dimethylallyladenosine synthase (474 aa).

One can recognise an MTTase N-terminal domain in the interval 3–120 (KKLHIKTWGC…LPEMINAVRG (118 aa)). [4Fe-4S] cluster is bound by residues cysteine 12, cysteine 49, cysteine 83, cysteine 157, cysteine 161, and cysteine 164. In terms of domain architecture, Radical SAM core spans 143–375 (RADGPTAFVS…QERINQQAMA (233 aa)). Residues 378 to 441 (RRMLGTVQRI…TNSLRGKIVR (64 aa)) enclose the TRAM domain.

It belongs to the methylthiotransferase family. MiaB subfamily. As to quaternary structure, monomer. [4Fe-4S] cluster serves as cofactor.

It is found in the cytoplasm. It carries out the reaction N(6)-dimethylallyladenosine(37) in tRNA + (sulfur carrier)-SH + AH2 + 2 S-adenosyl-L-methionine = 2-methylsulfanyl-N(6)-dimethylallyladenosine(37) in tRNA + (sulfur carrier)-H + 5'-deoxyadenosine + L-methionine + A + S-adenosyl-L-homocysteine + 2 H(+). Its function is as follows. Catalyzes the methylthiolation of N6-(dimethylallyl)adenosine (i(6)A), leading to the formation of 2-methylthio-N6-(dimethylallyl)adenosine (ms(2)i(6)A) at position 37 in tRNAs that read codons beginning with uridine. This is tRNA-2-methylthio-N(6)-dimethylallyladenosine synthase from Klebsiella pneumoniae (strain 342).